The following is a 353-amino-acid chain: Mitochondrial distribution and morphology protein 12 (353 aa).

In terms of domain architecture, SMP-LTD spans 1 to 330 (MSFDIKWENL…WPSWICLDMN (330 aa)). 3 stretches are compositionally biased toward acidic residues: residues 64–75 (DEFYEDTTDSPE), 84–103 (TGDD…DDDG), and 330–342 (NDDD…EENP). Disordered regions lie at residues 64–140 (DEFY…NRSR) and 330–353 (NDDD…HVGS).

Belongs to the MDM12 family. In terms of assembly, component of the ER-mitochondria encounter structure (ERMES) or MDM complex, composed of MMM1, MDM10, MDM12 and MDM34. An MMM1 homodimer associates with one molecule of MDM12 on each side in a pairwise head-to-tail manner, and the SMP-LTD domains of MMM1 and MDM12 generate a continuous hydrophobic tunnel for phospholipid trafficking.

The protein resides in the mitochondrion outer membrane. The protein localises to the endoplasmic reticulum membrane. Its function is as follows. Component of the ERMES/MDM complex, which serves as a molecular tether to connect the endoplasmic reticulum (ER) and mitochondria. Components of this complex are involved in the control of mitochondrial shape and protein biogenesis, and function in nonvesicular lipid trafficking between the ER and mitochondria. MDM12 is required for the interaction of the ER-resident membrane protein MMM1 and the outer mitochondrial membrane-resident beta-barrel protein MDM10. The MDM12-MMM1 subcomplex functions in the major beta-barrel assembly pathway that is responsible for biogenesis of all mitochondrial outer membrane beta-barrel proteins, and acts in a late step after the SAM complex. The MDM10-MDM12-MMM1 subcomplex further acts in the TOM40-specific pathway after the action of the MDM12-MMM1 complex. Essential for establishing and maintaining the structure of mitochondria and maintenance of mtDNA nucleoids. The sequence is that of Mitochondrial distribution and morphology protein 12 from Candida tropicalis (strain ATCC MYA-3404 / T1) (Yeast).